Reading from the N-terminus, the 459-residue chain is Vasoactive intestinal polypeptide receptor 1 (459 aa).

The signal sequence occupies residues 1 to 30 (MRPPSPPHVRWLCVLAGALACALRPAGSQA). Topologically, residues 31–142 (ASPQHECEYL…EQQQTKFYNT (112 aa)) are extracellular. 5 disulfide bridges follow: Cys37–Cys209, Cys50–Cys72, Cys63–Cys105, Cys86–Cys122, and Cys216–Cys286. Asn58, Asn69, and Asn100 each carry an N-linked (GlcNAc...) asparagine glycan. The helical transmembrane segment at 143–167 (VKTGYTIGYSLSLASLLVAMAILSL) threads the bilayer. Topologically, residues 168 to 175 (FRKLHCTR) are cytoplasmic. Residues 176–197 (NYIHMHLFMSFILRATAVFIKD) form a helical membrane-spanning segment. The Extracellular portion of the chain corresponds to 198 to 217 (MALFNSGEIDHCSEASVGCK). The helical transmembrane segment at 218 to 242 (AAVVFFQYCVMANFFWLLVEGLYLY) threads the bilayer. The Cytoplasmic portion of the chain corresponds to 243–255 (TLLAVSFFSERKY). A helical transmembrane segment spans residues 256–277 (FWGYILIGWGVPSVFITIWTVV). Topologically, residues 278–293 (RIYFEDFGCWDTIINS) are extracellular. N-linked (GlcNAc...) asparagine glycosylation occurs at Asn292. The chain crosses the membrane as a helical span at residues 294 to 318 (SLWWIIKAPILLSILVNFVLFICII). At 319-340 (RILVQKLRPPDIGKNDSSPYSR) the chain is on the cytoplasmic side. Residues 341-361 (LAKSTLLLIPLFGIHYVMFAF) traverse the membrane as a helical segment. Residues 362 to 369 (FPDNFKAQ) lie on the Extracellular side of the membrane. A helical membrane pass occupies residues 370–393 (VKMVFELVVGSFQGFVVAILYCFL). Over 394–459 (NGEVQAELRR…SSFQAEVSLV (66 aa)) the chain is Cytoplasmic.

Belongs to the G-protein coupled receptor 2 family. In terms of assembly, interacts with ADCYAP1/PACAP; activated by both PACAP27 and PACAP38 neuropeptides. Interacts with VIP; the interaction results in VIPR1 activation. As to expression, in liver, lung, intestines, thymus and brain (mostly in the cerebral cortex and hippocampus).

It localises to the cell membrane. G protein-coupled receptor activated by the neuropeptides vasoactive intestinal peptide (VIP) and pituitary adenylate cyclase-activating polypeptide (ADCYAP1/PACAP). Binds VIP and both PACAP27 and PACAP38 bioactive peptides with the following order of ligand affinity VIP = PACAP27 &gt; PACAP38. Ligand binding causes a conformation change that triggers signaling via guanine nucleotide-binding proteins (G proteins) and modulates the activity of downstream effectors. Activates cAMP-dependent pathway. In Rattus norvegicus (Rat), this protein is Vasoactive intestinal polypeptide receptor 1.